The primary structure comprises 237 residues: Synapse differentiation-inducing gene protein 1-like (237 aa).

3 disordered regions span residues 1 to 23, 84 to 111, and 127 to 148; these read MESL…HRPY, AGSC…PGQA, and ELQG…ESEC. Over 1–161 the chain is Extracellular; sequence MESLSELQNP…FLTLPPRDHL (161 aa). The span at 129-148 shows a compositional bias: acidic residues; that stretch reads QGQEDSQEEESDGTSSESEC. Residues 162–182 form a helical membrane-spanning segment; the sequence is GLTLFSMLCCFWPLGIAAFYF. The Cytoplasmic portion of the chain corresponds to 183–204; sequence SQGTSKAISKGDFRLASTTSRR. Residues 205–225 form a helical membrane-spanning segment; that stretch reads ALFLATLSIAVGAGLYVAVVV. Residues 226–237 lie on the Extracellular side of the membrane; sequence ALAAYMSQNGHG.

This sequence belongs to the CD225/Dispanin family. In terms of tissue distribution, expression is restricted to the caudate-putamen. Down-regulated in R6/2 transgenic mice, a model for Huntington disease.

The protein localises to the membrane. It is found in the golgi apparatus. Its subcellular location is the cis-Golgi network. The sequence is that of Synapse differentiation-inducing gene protein 1-like (Syndig1l) from Mus musculus (Mouse).